A 285-amino-acid polypeptide reads, in one-letter code: Small ribosomal subunit biogenesis GTPase RsgA (285 aa).

Positions 56–217 (DNLLIRPIVA…IIDTPGFSSI (162 aa)) constitute a CP-type G domain. GTP contacts are provided by residues 105 to 108 (NKID) and 159 to 167 (GPSGVGKSS). Positions 241, 246, 248, and 254 each coordinate Zn(2+).

This sequence belongs to the TRAFAC class YlqF/YawG GTPase family. RsgA subfamily. Monomer. Associates with 30S ribosomal subunit, binds 16S rRNA. Zn(2+) serves as cofactor.

Its subcellular location is the cytoplasm. One of several proteins that assist in the late maturation steps of the functional core of the 30S ribosomal subunit. Helps release RbfA from mature subunits. May play a role in the assembly of ribosomal proteins into the subunit. Circularly permuted GTPase that catalyzes slow GTP hydrolysis, GTPase activity is stimulated by the 30S ribosomal subunit. The sequence is that of Small ribosomal subunit biogenesis GTPase RsgA from Fusobacterium nucleatum subsp. nucleatum (strain ATCC 25586 / DSM 15643 / BCRC 10681 / CIP 101130 / JCM 8532 / KCTC 2640 / LMG 13131 / VPI 4355).